Consider the following 509-residue polypeptide: Lengsin (509 aa).

The tract at residues 1-34 is disordered; it reads MNNEEDLLQEDSTRDEGNETEANSMNTLRRTRKK. The GS beta-grasp domain maps to 83 to 177; sequence NRLQFVRFEA…VICDTFTVTG (95 aa). Residues 184 to 509 form the GS catalytic domain; that stretch reads PRYIAKRQLS…ERNKFLEYFI (326 aa).

Belongs to the glutamine synthetase family. In terms of assembly, dodecamer. Interacts with BFSP2 and VIM. As to expression, abundantly expressed in lens.

May act as a component of the cytoskeleton or as a chaperone for the reorganization of intermediate filament proteins during terminal differentiation in the lens. Does not seem to have enzymatic activity. This chain is Lengsin (LGSN), found in Homo sapiens (Human).